The sequence spans 504 residues: Nuclear hormone receptor family member nhr-80 (504 aa).

The segment at residues S27–P103 is a DNA-binding region (nuclear receptor). 2 consecutive NR C4-type zinc fingers follow at residues C30–C50 and C66–C86. Residues S177–T192 are compositionally biased toward low complexity. The disordered stretch occupies residues S177–A199. The NR LBD domain occupies E214 to D466. Residues L455–D466 form an AF-2 region.

This sequence belongs to the nuclear hormone receptor family. As to quaternary structure, interacts with nuclear hormone receptor nhr-49; the interaction is direct. In terms of tissue distribution, expressed in the intestine and in some head and tail neurons, as well as the ventral nerve cord.

The protein localises to the nucleus. Transcription factor. Binds to regulatory elements and regulates transcription of target genes, including acyltransferase dgat-2. As part of a lysosome-to-nucleus retrograde lipid signaling pathway, acts as a direct nuclear receptor of oleoylethanolamide (OEA) and, acting in concert with nuclear hormone receptor nhr-49, activates the transcription of genes promoting longevity and mitochondrial beta-oxidation. Required to modulate expression of delta-9 fatty acid desaturases, thereby regulating lipid metabolism; in some contexts, acting in concert with nhr-49. Involved in modulation of lipid metabolism in response to the citrate-induced mitochondrial unfolded protein response (mtUPR), acting downstream of transcription factor dve-1 and ubiquitin-like protein 5. Plays a role in modulating mitochondrial morphology and function. Involved in positively modulating life-span in a germline-dependent manner, acting in concert with nuclear hormone receptor daf-12. Plays a role in transgenerational lipid accumulation in response to a high-fat diet. This Caenorhabditis elegans protein is Nuclear hormone receptor family member nhr-80.